We begin with the raw amino-acid sequence, 183 residues long: Orotate phosphoribosyltransferase (183 aa).

5-phospho-alpha-D-ribose 1-diphosphate contacts are provided by residues Arg21, Lys88, and 112–120; that span reads EDVVTTGES. Orotate is bound by residues Thr116 and Arg144.

The protein belongs to the purine/pyrimidine phosphoribosyltransferase family. PyrE subfamily. As to quaternary structure, homodimer. The cofactor is Mg(2+).

The enzyme catalyses orotidine 5'-phosphate + diphosphate = orotate + 5-phospho-alpha-D-ribose 1-diphosphate. It functions in the pathway pyrimidine metabolism; UMP biosynthesis via de novo pathway; UMP from orotate: step 1/2. Catalyzes the transfer of a ribosyl phosphate group from 5-phosphoribose 1-diphosphate to orotate, leading to the formation of orotidine monophosphate (OMP). This is Orotate phosphoribosyltransferase from Thermus thermophilus (strain ATCC 27634 / DSM 579 / HB8).